The following is a 309-amino-acid chain: tRNA dimethylallyltransferase (309 aa).

11-18 (GPTASGKS) contributes to the ATP binding site. 13–18 (TASGKS) is a binding site for substrate. Interaction with substrate tRNA stretches follow at residues 36–39 (DSMQ) and 160–164 (QRLLR).

The protein belongs to the IPP transferase family. In terms of assembly, monomer. Mg(2+) serves as cofactor.

It carries out the reaction adenosine(37) in tRNA + dimethylallyl diphosphate = N(6)-dimethylallyladenosine(37) in tRNA + diphosphate. In terms of biological role, catalyzes the transfer of a dimethylallyl group onto the adenine at position 37 in tRNAs that read codons beginning with uridine, leading to the formation of N6-(dimethylallyl)adenosine (i(6)A). This chain is tRNA dimethylallyltransferase, found in Caulobacter sp. (strain K31).